The chain runs to 566 residues: Developmental regulatory protein wetA (566 aa).

Disordered stretches follow at residues 116–174 (VPAV…LMRP), 232–316 (STEG…SDSL), 334–364 (AWWP…SIQS), 381–400 (SSFD…VTSA), and 429–542 (PPVQ…RRRK). 2 stretches are compositionally biased toward polar residues: residues 165-174 (QSFSPSLMRP) and 269-291 (AQQQ…SSPP). Residues 298–316 (SSPHSSDPQSLSSWHSDSL) are compositionally biased toward low complexity. Composition is skewed to polar residues over residues 347-364 (PSYQ…SIQS) and 381-398 (SSFD…SVVT). Low complexity predominate over residues 435 to 448 (SRSPSLSPRGRGSP). Residues 449–462 (TQGSPLRNEASTKT) are compositionally biased toward polar residues. Residues 463–473 (SPHRRGYHGRK) are compositionally biased toward basic residues. Positions 482-500 (PKPVKGPNSSSPGSGSNKS) are enriched in low complexity. The segment covering 501 to 511 (LTVSFVNFTPN) has biased composition (polar residues).

The protein belongs to the wetA family.

In terms of biological role, brlA, abaA and wetA are pivotal regulators of conidiophore development and conidium maturation. They act individually and together to regulate their own expression and that of numerous other sporulation-specific genes. Plays an essential role in the completion of conidial maturation and is essential for trehalose biogenesis in conidia. Negatively regulates expression of the melanin biosynthetic gene cluster. Also plays an a role in the early phase of fungal growth including proper hyphal branching. The sequence is that of Developmental regulatory protein wetA from Aspergillus fumigatus (strain ATCC MYA-4609 / CBS 101355 / FGSC A1100 / Af293) (Neosartorya fumigata).